Here is a 160-residue protein sequence, read N- to C-terminus: CXXC motif containing zinc binding protein (160 aa).

Residues Cys33, Cys36, Cys67, and Cys70 each coordinate Zn(2+). A Phosphoserine modification is found at Ser75.

The protein belongs to the UPF0587 family. As to quaternary structure, monomer.

The chain is CXXC motif containing zinc binding protein (CZIB) from Bos taurus (Bovine).